The primary structure comprises 495 residues: Internal alternative NAD(P)H-ubiquinone oxidoreductase A1, mitochondrial (495 aa).

The transit peptide at 1-41 (MPWFKNLIKISKTITNQSSSYKSITPLASPLLAQFLQFTKQ) directs the protein to the mitochondrion. Position 61–91 (61–91 (RIVVLGSGWAGCRLMKDIDTNIYDVVCVSPR)) interacts with FAD. 228 to 264 (LHCVVVGGGPTGVEFSGELSDFILKDVHQRYAHVKDY) contributes to the NAD(+) binding site. The short motif at 486 to 495 (LVFGRDISRI) is the Microbody targeting signal element.

Belongs to the NADH dehydrogenase family. The cofactor is FAD.

It localises to the mitochondrion inner membrane. The protein localises to the peroxisome. The enzyme catalyses a quinone + NADH + H(+) = a quinol + NAD(+). It catalyses the reaction a ubiquinone + NADH + H(+) = a ubiquinol + NAD(+). Its function is as follows. Alternative NADH-ubiquinone oxidoreductase which catalyzes the oxidation of mitochondrial NADH does not translocate protons across the inner mitochondrial membrane. In Solanum tuberosum (Potato), this protein is Internal alternative NAD(P)H-ubiquinone oxidoreductase A1, mitochondrial (NDA1).